The chain runs to 202 residues: Small ribosomal subunit protein uS4c-1 (202 aa).

The region spanning 90–152 is the S4 RNA-binding domain; sequence MRLDNIVLRA…NKSRQLIDLN (63 aa).

It belongs to the universal ribosomal protein uS4 family. Part of the 30S ribosomal subunit. Contacts protein S5. The interaction surface between S4 and S5 is involved in control of translational fidelity.

The protein resides in the plastid. It localises to the chloroplast. In terms of biological role, one of the primary rRNA binding proteins, it binds directly to 16S rRNA where it nucleates assembly of the body of the 30S subunit. Functionally, with S5 and S12 plays an important role in translational accuracy. This is Small ribosomal subunit protein uS4c-1 from Cyanidium caldarium (Red alga).